A 131-amino-acid polypeptide reads, in one-letter code: Small ribosomal subunit protein uS11 (131 aa).

This sequence belongs to the universal ribosomal protein uS11 family. As to quaternary structure, part of the 30S ribosomal subunit. Interacts with proteins S7 and S18. Binds to IF-3.

Located on the platform of the 30S subunit, it bridges several disparate RNA helices of the 16S rRNA. Forms part of the Shine-Dalgarno cleft in the 70S ribosome. This is Small ribosomal subunit protein uS11 from Helicobacter pylori (strain Shi470).